The sequence spans 270 residues: Transcription factor PU.1 (270 aa).

Positions S123–T164 are disordered. 2 positions are modified to phosphoserine: S140 and S146. The segment covering L153–T164 has biased composition (low complexity). The segment at residues I170–S253 is a DNA-binding region (ETS). Positions 217, 230, 233, and 243 each coordinate DNA.

Belongs to the ETS family. Binds DNA as a monomer. Can form homomers. Directly interacts with CEBPD/NF-IL6-beta; this interaction does not affect DNA-binding properties of each partner. Interacts with NONO/p54(nrb). Interacts with RUNX1/AML1. Interacts with GFI1; the interaction represses SPI1 transcriptional activity, hence blocks SPI1-induced macrophage differentiation of myeloid progenitor cells. Interacts with CEBPE. Interacts with IRF4/Pip and IRF8. Interacts with JUN. Interacts with RB1. Interacts with TBP. In terms of tissue distribution, in the bone marrow, concentrated in hematopoietic stem cell, lymphoid progenitor, myeloid lineage (granulocyte macrophage progenitors, classical dendritic cells, monocytes) and B-cell clusters. Among B-cells, predominantly expressed in pre-B1 cells. Expressed in germinal center B-cells.

Its subcellular location is the nucleus. With respect to regulation, transcriptional activity at macrophage-specific genes is inhibited by interaction with GFI1, which results in the inhibition of SPI1-induced macrophage differentiation of myeloid progenitor cells, but not that of the granulocyte lineage. Its function is as follows. Pioneer transcription factor, which controls hematopoietic cell fate by decompacting stem cell heterochromatin and allowing other transcription factors to enter otherwise inaccessible genomic sites. Once in open chromatin, can directly control gene expression by binding genetic regulatory elements and can also more broadly influence transcription by recruiting transcription factors, such as interferon regulatory factors (IRFs), to otherwise inaccessible genomic regions. Transcriptionally activates genes important for myeloid and lymphoid lineages, such as CSF1R. Transcriptional activation from certain promoters, possibly containing low affinity binding sites, is achieved cooperatively with other transcription factors. FCER1A transactivation is achieved in cooperation with GATA1. May be particularly important for the pro- to pre-B cell transition. Binds (via the ETS domain) onto the purine-rich DNA core sequence 5'-GAGGAA-3', also known as the PU-box. In vitro can bind RNA and interfere with pre-mRNA splicing. This is Transcription factor PU.1 (SPI1) from Homo sapiens (Human).